Reading from the N-terminus, the 505-residue chain is 2,3-bisphosphoglycerate-independent phosphoglycerate mutase (505 aa).

Positions 13 and 63 each coordinate Mn(2+). Catalysis depends on S63, which acts as the Phosphoserine intermediate. Substrate is bound by residues H124, 153-154, R183, R189, 254-257, and K330; these read RD and RADR. D396, H400, D437, H438, and H456 together coordinate Mn(2+).

The protein belongs to the BPG-independent phosphoglycerate mutase family. In terms of assembly, monomer. The cofactor is Mn(2+).

It carries out the reaction (2R)-2-phosphoglycerate = (2R)-3-phosphoglycerate. It functions in the pathway carbohydrate degradation; glycolysis; pyruvate from D-glyceraldehyde 3-phosphate: step 3/5. In terms of biological role, catalyzes the interconversion of 2-phosphoglycerate and 3-phosphoglycerate. The polypeptide is 2,3-bisphosphoglycerate-independent phosphoglycerate mutase (Dinoroseobacter shibae (strain DSM 16493 / NCIMB 14021 / DFL 12)).